The sequence spans 138 residues: Spermatid nuclear transition protein 4 (138 aa).

Positions 1–11 (AKVSRKPREPR) are enriched in basic and acidic residues. Positions 1-138 (AKVSRKPREP…QGVTRRGRRY (138 aa)) are disordered. Ser-4 carries the phosphoserine; by PKC modification. Residues 5-23 (RKPREPRTAVTQSTRRIKR) carry the Nuclear localization signal motif. Basic residues-rich tracts occupy residues 19–34 (RRIK…RSRG), 43–57 (MKIK…RRKI), and 65–74 (KKAKKARKHF). Thr-26 bears the Phosphothreonine; by PKA mark. Residues 54-72 (RRKIQTSAGQPKKAKKARK) carry the Nuclear localization signal motif. Over residues 86–101 (NKKTNQNKRQNQNKRQ) the composition is skewed to low complexity. Polar residues predominate over residues 120–131 (PTTSCKWCSQGV).

The protein resides in the nucleus. It is found in the chromosome. Functionally, involved in nuclear basic protein transition: histones are replaced by spermatid specific proteins which are themselves replaced by protamines in late spermatids. The protein is Spermatid nuclear transition protein 4 (TNP4) of Sus scrofa (Pig).